Here is a 316-residue protein sequence, read N- to C-terminus: FAD:protein FMN transferase (316 aa).

FAD is bound by residues Met-14, 88–90 (AFN), and Asp-146. Mg(2+) is bound at residue Ala-149. Residues Lys-152 and Leu-231 each coordinate FAD. The Mg(2+) site is built by Asp-257 and Thr-261.

This sequence belongs to the ApbE family. Mg(2+) serves as cofactor.

It is found in the cytoplasm. It catalyses the reaction L-threonyl-[protein] + FAD = FMN-L-threonyl-[protein] + AMP + H(+). Functionally, flavin transferase that catalyzes the transfer of the FMN moiety of FAD and its covalent binding to the hydroxyl group of a threonine residue in a target flavoprotein. Is responsible for the modification of the fumarate reductase KPK_2907. The protein is FAD:protein FMN transferase of Klebsiella pneumoniae (strain 342).